The chain runs to 303 residues: Sulfotransferase 6B1 (303 aa).

Position 65–70 (65–70 (KCGSNW)) interacts with 3'-phosphoadenylyl sulfate. Histidine 118 acts as the Proton acceptor in catalysis. 3'-phosphoadenylyl sulfate is bound by residues arginine 140, serine 148, tyrosine 203, 237–242 (STFQAM), and 259–261 (RKG).

The protein belongs to the sulfotransferase 1 family.

It is found in the cytoplasm. Its subcellular location is the cytosol. It catalyses the reaction thyroxine + 3'-phosphoadenylyl sulfate = thyroxine sulfate + adenosine 3',5'-bisphosphate + H(+). In terms of biological role, sulfotransferase that utilizes 3'-phospho-5'-adenylyl sulfate (PAPS) as sulfonate donor to catalyze the sulfate conjugation of thyroxine. Involved in the metabolism of thyroxine. The sequence is that of Sulfotransferase 6B1 (SULT6B1) from Gorilla gorilla gorilla (Western lowland gorilla).